A 180-amino-acid polypeptide reads, in one-letter code: MGNFHATTIFAVHHNGECAMAGDGQVTMGNAVVMKHTARKVRKLFQGKVLAGFAGSVADAFTLFEMFEGKLEEYNGNLQRAAVEMAKQWRGDKMLRQLEAMLIVMDKTTMLLVSGTGEVIEPDDGILAIGSGGNYALSAGRALKQYASEHLTAKQIAKASLNIAGDICVYTNHNIIVEEL.

The active site involves Thr-7. Na(+) is bound by residues Gly-165, Cys-168, and Thr-171.

The protein belongs to the peptidase T1B family. HslV subfamily. In terms of assembly, a double ring-shaped homohexamer of HslV is capped on each side by a ring-shaped HslU homohexamer. The assembly of the HslU/HslV complex is dependent on binding of ATP.

Its subcellular location is the cytoplasm. The enzyme catalyses ATP-dependent cleavage of peptide bonds with broad specificity.. Its activity is regulated as follows. Allosterically activated by HslU binding. Protease subunit of a proteasome-like degradation complex believed to be a general protein degrading machinery. In Bacillus cereus (strain Q1), this protein is ATP-dependent protease subunit HslV.